The primary structure comprises 651 residues: Peptidoglycan D,D-transpeptidase MrdA (651 aa).

The helical transmembrane segment at 30-50 (LVAFLGILLLTGVLFTNIYQL) threads the bilayer. S338 serves as the catalytic Acyl-ester intermediate.

Belongs to the transpeptidase family. MrdA subfamily.

The protein localises to the cell inner membrane. It carries out the reaction Preferential cleavage: (Ac)2-L-Lys-D-Ala-|-D-Ala. Also transpeptidation of peptidyl-alanyl moieties that are N-acyl substituents of D-alanine.. It participates in cell wall biogenesis; peptidoglycan biosynthesis. Catalyzes cross-linking of the peptidoglycan cell wall. This chain is Peptidoglycan D,D-transpeptidase MrdA, found in Haemophilus influenzae (strain ATCC 51907 / DSM 11121 / KW20 / Rd).